A 149-amino-acid chain; its full sequence is Large ribosomal subunit protein uL13 (149 aa).

The protein belongs to the universal ribosomal protein uL13 family. Part of the 50S ribosomal subunit.

Functionally, this protein is one of the early assembly proteins of the 50S ribosomal subunit, although it is not seen to bind rRNA by itself. It is important during the early stages of 50S assembly. This chain is Large ribosomal subunit protein uL13, found in Chlamydia pneumoniae (Chlamydophila pneumoniae).